The sequence spans 229 residues: Large ribosomal subunit protein uL1 (229 aa).

Belongs to the universal ribosomal protein uL1 family. As to quaternary structure, part of the 50S ribosomal subunit.

Its function is as follows. Binds directly to 23S rRNA. The L1 stalk is quite mobile in the ribosome, and is involved in E site tRNA release. In terms of biological role, protein L1 is also a translational repressor protein, it controls the translation of the L11 operon by binding to its mRNA. The protein is Large ribosomal subunit protein uL1 of Streptococcus pyogenes serotype M3 (strain SSI-1).